A 609-amino-acid polypeptide reads, in one-letter code: Thiamine metabolism regulatory protein THI3 (609 aa).

The disordered stretch occupies residues 578–598 (SKQVQEENENSSAVNTPTPEF).

This sequence belongs to the TPP enzyme family. Mg(2+) is required as a cofactor. Thiamine diphosphate serves as cofactor.

It is found in the nucleus. It carries out the reaction 4-methyl-2-oxopentanoate + H(+) = 3-methylbutanal + CO2. The catalysed reaction is (S)-3-methyl-2-oxopentanoate + H(+) = 2-methylbutanal + CO2. It participates in amino-acid degradation; Ehrlich pathway. Functionally, one of five 2-oxo acid decarboxylases (PDC1, PDC5, PDC6, ARO10, and THI3) involved in amino acid catabolism. The enzyme catalyzes the decarboxylation of amino acids, which, in a first step, have been transaminated to the corresponding 2-oxo acids (alpha-keto-acids). In a third step, the resulting aldehydes are reduced to alcohols, collectively referred to as fusel oils or alcohols. Its preferred substrates are the transaminated amino acids derived from leucine (4-methyl-2-oxopentanoate, also alpha-keto-isocaproate) and isoleucine ((3S)-3-methyl-2-oxopentanoate, also alpha-keto-beta-methylvalerate), whereas transaminated valine, transaminated aromatic amino acids, and pyruvate are no substrates. In analogy to the pyruvate decarboxylases the enzyme may in a side-reaction catalyze condensation (or carboligation) reactions leading to the formation of 2-hydroxy ketone, collectively called acyloins. The enzyme is also positively regulating the thiamine metabolism by a molecular mechanism that may involve thiamine concentration sensing and signal transmission. This chain is Thiamine metabolism regulatory protein THI3 (THI3), found in Saccharomyces cerevisiae (strain ATCC 204508 / S288c) (Baker's yeast).